Here is a 125-residue protein sequence, read N- to C-terminus: MKFILIAIGGAFGALFRYFVSKVFNTHFPFNYIPLGTVIVNVLGAFLLSFVLFSSIERFEVNPNFVLFFGTGFLGAFTTFSTFAYETLSLFLTSPFRALVYFFANLFFGFFAAFFGMVLGRGKFL.

A run of 4 helical transmembrane segments spans residues 3–23 (FILI…VSKV), 33–53 (IPLG…FVLF), 65–85 (FVLF…TFAY), and 99–119 (LVYF…GMVL). Residues Gly75 and Thr78 each contribute to the Na(+) site.

This sequence belongs to the fluoride channel Fluc/FEX (TC 1.A.43) family.

It is found in the cell inner membrane. The enzyme catalyses fluoride(in) = fluoride(out). Its activity is regulated as follows. Na(+) is not transported, but it plays an essential structural role and its presence is essential for fluoride channel function. In terms of biological role, fluoride-specific ion channel. Important for reducing fluoride concentration in the cell, thus reducing its toxicity. This Thermosipho melanesiensis (strain DSM 12029 / CIP 104789 / BI429) protein is Fluoride-specific ion channel FluC.